The following is a 67-amino-acid chain: Cold shock protein (67 aa).

In terms of domain architecture, CSD spans 4–64 (GTVKWFNAEK…GAKGPQATGV (61 aa)).

It localises to the cytoplasm. This Arthrobacter globiformis protein is Cold shock protein (csp).